The following is a 476-amino-acid chain: Cytosolic iron-sulfur assembly component 3 (476 aa).

Ala2 is subject to N-acetylalanine. 8 residues coordinate [4Fe-4S] cluster: Cys24, Cys71, Cys74, Cys77, Cys190, Cys246, Cys395, and Cys399.

The protein belongs to the NARF family. In terms of assembly, external component of the CIA complex. In the CIA complex, interacts directly with CIAO1 and MMS19.

In terms of biological role, component of the cytosolic iron-sulfur protein assembly (CIA) complex, a multiprotein complex that mediates the incorporation of iron-sulfur cluster into extramitochondrial Fe/S proteins. Seems to negatively regulate the level of HIF1A expression, although this effect could be indirect. In Rattus norvegicus (Rat), this protein is Cytosolic iron-sulfur assembly component 3.